Consider the following 204-residue polypeptide: Large ribosomal subunit protein uL4 (204 aa).

Residues 49 to 72 are disordered; the sequence is QKNRAAVSGGGKKPWRQKGTGRAR.

This sequence belongs to the universal ribosomal protein uL4 family. As to quaternary structure, part of the 50S ribosomal subunit.

Its function is as follows. One of the primary rRNA binding proteins, this protein initially binds near the 5'-end of the 23S rRNA. It is important during the early stages of 50S assembly. It makes multiple contacts with different domains of the 23S rRNA in the assembled 50S subunit and ribosome. Forms part of the polypeptide exit tunnel. The chain is Large ribosomal subunit protein uL4 from Saccharophagus degradans (strain 2-40 / ATCC 43961 / DSM 17024).